The sequence spans 1122 residues: Maestro heat-like repeat-containing protein family member 7 (1122 aa).

2 disordered regions span residues 1-144 and 183-203; these read MALS…LSED and SHTI…NTSL. Low complexity predominate over residues 33–65; the sequence is TTPRPTPDLTLAPLPAHGVALAPALHPALSPDP. 3 stretches are compositionally biased toward polar residues: residues 75 to 95, 120 to 136, and 184 to 203; these read DISN…INTA, PVPS…SPEN, and HTIS…NTSL. N200, N210, N255, N267, and N296 each carry an N-linked (GlcNAc...) asparagine glycan. Residues 246-265 form a disordered region; sequence WNTGSKGSVNVTSNSQPRSG. A Phosphoserine modification is found at S356. Residues 363–385 form a disordered region; it reads FRSPPEGTSEDAKANESEKRDHD. A compositionally biased stretch (basic and acidic residues) spans 372–385; it reads EDAKANESEKRDHD. 2 N-linked (GlcNAc...) asparagine glycosylation sites follow: N541 and N546. Transmembrane regions (helical) follow at residues 548 to 568 and 722 to 742; these read TLVT…LLLG and LLPI…ALLM. 4 HEAT repeats span residues 913 to 950, 992 to 1029, 1035 to 1072, and 1080 to 1117; these read QELC…MEQV, TKVQ…GQAK, SVYI…KLRM, and EQLT…FFLL.

The protein localises to the membrane. In Rattus norvegicus (Rat), this protein is Maestro heat-like repeat-containing protein family member 7 (Mroh7).